The sequence spans 637 residues: 1-deoxy-D-xylulose-5-phosphate synthase (637 aa).

Residues H76 and 117-119 each bind thiamine diphosphate; that span reads GHS. D148 contributes to the Mg(2+) binding site. Thiamine diphosphate is bound by residues 149 to 150, N177, Y294, and E381; that span reads GA. A Mg(2+)-binding site is contributed by N177.

It belongs to the transketolase family. DXPS subfamily. As to quaternary structure, homodimer. It depends on Mg(2+) as a cofactor. The cofactor is thiamine diphosphate.

The catalysed reaction is D-glyceraldehyde 3-phosphate + pyruvate + H(+) = 1-deoxy-D-xylulose 5-phosphate + CO2. Its pathway is metabolic intermediate biosynthesis; 1-deoxy-D-xylulose 5-phosphate biosynthesis; 1-deoxy-D-xylulose 5-phosphate from D-glyceraldehyde 3-phosphate and pyruvate: step 1/1. Its function is as follows. Catalyzes the acyloin condensation reaction between C atoms 2 and 3 of pyruvate and glyceraldehyde 3-phosphate to yield 1-deoxy-D-xylulose-5-phosphate (DXP). The protein is 1-deoxy-D-xylulose-5-phosphate synthase of Neisseria meningitidis serogroup B (strain ATCC BAA-335 / MC58).